The primary structure comprises 421 residues: 3-isopropylmalate dehydratase large subunit (421 aa).

Residues Cys301, Cys361, and Cys364 each contribute to the [4Fe-4S] cluster site.

The protein belongs to the aconitase/IPM isomerase family. LeuC type 2 subfamily. Heterodimer of LeuC and LeuD. [4Fe-4S] cluster is required as a cofactor.

The catalysed reaction is (2R,3S)-3-isopropylmalate = (2S)-2-isopropylmalate. The protein operates within amino-acid biosynthesis; L-leucine biosynthesis; L-leucine from 3-methyl-2-oxobutanoate: step 2/4. Its function is as follows. Catalyzes the isomerization between 2-isopropylmalate and 3-isopropylmalate, via the formation of 2-isopropylmaleate. The protein is 3-isopropylmalate dehydratase large subunit of Desulfitobacterium hafniense (strain Y51).